The following is a 469-amino-acid chain: 6-phosphofructo-2-kinase/fructose-2,6-bisphosphatase 4 (469 aa).

The segment at 1–249 (MASPRELTQN…YYLMNIHVTP (249 aa)) is 6-phosphofructo-2-kinase. 46–54 (GLPARGKTY) is a binding site for ATP. Beta-D-fructose 6-phosphate is bound by residues arginine 79 and arginine 103. Aspartate 129 is a catalytic residue. Beta-D-fructose 6-phosphate contacts are provided by threonine 131 and arginine 137. Residue cysteine 159 is part of the active site. 168 to 173 (NIVQVK) contributes to the ATP binding site. Lysine 173, arginine 194, and tyrosine 198 together coordinate beta-D-fructose 6-phosphate. Residues 250–469 (RSIYLCRHGE…EALVTVPAHQ (220 aa)) are fructose-2,6-bisphosphatase. Residue arginine 256 participates in beta-D-fructose 2,6-bisphosphate binding. Histidine 257 functions as the Tele-phosphohistidine intermediate in the catalytic mechanism. Residues asparagine 263, glycine 269, and arginine 306 each coordinate beta-D-fructose 2,6-bisphosphate. Glutamate 326 acts as the Proton donor/acceptor in catalysis. The beta-D-fructose 2,6-bisphosphate site is built by tyrosine 337, arginine 351, lysine 355, tyrosine 366, glutamine 392, and arginine 396. Residue 348–351 (FALR) participates in ATP binding. ATP is bound by residues 392–396 (QAVMR) and tyrosine 428. Position 444 is a phosphothreonine; by PKC (threonine 444).

The protein in the C-terminal section; belongs to the phosphoglycerate mutase family. As to quaternary structure, homodimer.

It carries out the reaction beta-D-fructose 2,6-bisphosphate + H2O = beta-D-fructose 6-phosphate + phosphate. The enzyme catalyses beta-D-fructose 6-phosphate + ATP = beta-D-fructose 2,6-bisphosphate + ADP + H(+). The most important regulatory mechanism of these opposing activities is by phosphorylation and dephosphorylation of the enzyme. Its function is as follows. Synthesis and degradation of fructose 2,6-bisphosphate. This Homo sapiens (Human) protein is 6-phosphofructo-2-kinase/fructose-2,6-bisphosphatase 4 (PFKFB4).